The sequence spans 285 residues: 33 kDa chaperonin (285 aa).

2 disulfides stabilise this stretch: cysteine 228–cysteine 230 and cysteine 261–cysteine 264.

It belongs to the HSP33 family. Post-translationally, under oxidizing conditions two disulfide bonds are formed involving the reactive cysteines. Under reducing conditions zinc is bound to the reactive cysteines and the protein is inactive.

It localises to the cytoplasm. In terms of biological role, redox regulated molecular chaperone. Protects both thermally unfolding and oxidatively damaged proteins from irreversible aggregation. Plays an important role in the bacterial defense system toward oxidative stress. The protein is 33 kDa chaperonin of Hahella chejuensis (strain KCTC 2396).